Reading from the N-terminus, the 212-residue chain is Small ribosomal subunit protein uS5 (212 aa).

The tract at residues 1–42 is disordered; the sequence is MPGRERRDGGRSADKNDNNKGRNDRGRNDRNNRRGRGRDDDR. Residues 45 to 108 enclose the S5 DRBM domain; that stretch reads YIERVVTINR…EEARKNFFRV (64 aa).

The protein belongs to the universal ribosomal protein uS5 family. As to quaternary structure, part of the 30S ribosomal subunit. Contacts proteins S4 and S8.

Its function is as follows. With S4 and S12 plays an important role in translational accuracy. Functionally, located at the back of the 30S subunit body where it stabilizes the conformation of the head with respect to the body. The polypeptide is Small ribosomal subunit protein uS5 (Corynebacterium kroppenstedtii (strain DSM 44385 / JCM 11950 / CIP 105744 / CCUG 35717)).